We begin with the raw amino-acid sequence, 305 residues long: Glycine--tRNA ligase alpha subunit (305 aa).

The protein belongs to the class-II aminoacyl-tRNA synthetase family. As to quaternary structure, tetramer of two alpha and two beta subunits.

The protein localises to the cytoplasm. It carries out the reaction tRNA(Gly) + glycine + ATP = glycyl-tRNA(Gly) + AMP + diphosphate. This Streptococcus gordonii (strain Challis / ATCC 35105 / BCRC 15272 / CH1 / DL1 / V288) protein is Glycine--tRNA ligase alpha subunit.